The chain runs to 143 residues: WW domain-containing protein C660.05 (143 aa).

The WW domain occupies 9–44; the sequence is GLPAGWVAQWDPTYQAYFYINETFEGAQPQWEPPIP. The segment at 115–143 is disordered; sequence HHGPLHGPHGGFGGRGGGRMGGRGGRGRR.

In Schizosaccharomyces pombe (strain 972 / ATCC 24843) (Fission yeast), this protein is WW domain-containing protein C660.05.